Reading from the N-terminus, the 204-residue chain is Guanylate kinase (204 aa).

Positions 3–181 (GTLYIVSAAS…AVSEMSAIFT (179 aa)) constitute a Guanylate kinase-like domain. An ATP-binding site is contributed by 10 to 17 (AASGTGKS).

It belongs to the guanylate kinase family.

The protein localises to the cytoplasm. It catalyses the reaction GMP + ATP = GDP + ADP. Essential for recycling GMP and indirectly, cGMP. The polypeptide is Guanylate kinase (gmk) (Xylella fastidiosa (strain 9a5c)).